The chain runs to 101 residues: Urease subunit gamma (101 aa).

It belongs to the urease gamma subunit family. In terms of assembly, heterotrimer of UreA (gamma), UreB (beta) and UreC (alpha) subunits. Three heterotrimers associate to form the active enzyme.

It localises to the cytoplasm. It catalyses the reaction urea + 2 H2O + H(+) = hydrogencarbonate + 2 NH4(+). The protein operates within nitrogen metabolism; urea degradation; CO(2) and NH(3) from urea (urease route): step 1/1. The polypeptide is Urease subunit gamma (Corynebacterium kroppenstedtii (strain DSM 44385 / JCM 11950 / CIP 105744 / CCUG 35717)).